A 316-amino-acid polypeptide reads, in one-letter code: uncharacterized protein (316 aa).

It belongs to the chlamydial CPn_0441/CT_007/TC_0275 family.

This is an uncharacterized protein from Chlamydia trachomatis serovar D (strain ATCC VR-885 / DSM 19411 / UW-3/Cx).